The chain runs to 695 residues: Interleukin-1 receptor accessory protein-like 1 (695 aa).

An N-terminal signal peptide occupies residues 1-24 (MKAPIPHLILLYATFTQSLKVVTK). Positions 25–134 (RGSADGCTDW…YCMKVSISLT (110 aa)) constitute an Ig-like C2-type 1 domain. Residues 25 to 357 (RGSADGCTDW…LLHKRELMYT (333 aa)) lie on the Extracellular side of the membrane. 2 cysteine pairs are disulfide-bonded: cysteine 31–cysteine 126 and cysteine 53–cysteine 118. 3 N-linked (GlcNAc...) asparagine glycosylation sites follow: asparagine 63, asparagine 122, and asparagine 138. 2 cysteine pairs are disulfide-bonded: cysteine 143–cysteine 185 and cysteine 164–cysteine 216. 2 Ig-like C2-type domains span residues 143 to 232 (CYNS…TELT) and 242 to 350 (PKLL…VLLH). 3 N-linked (GlcNAc...) asparagine glycosylation sites follow: asparagine 213, asparagine 264, and asparagine 331. A disulfide bridge links cysteine 267 with cysteine 334. A helical transmembrane segment spans residues 358 to 378 (VELAGGLGAILLLLICSVTIY). The Cytoplasmic portion of the chain corresponds to 379–695 (KCYKIEIMLF…RETSISSVIW (317 aa)). The TIR domain maps to 403-558 (KDYDAYLSYT…KFWKRLQYEM (156 aa)). The active site involves glutamate 490. Residues 548 to 643 (SKFWKRLQYE…TGTLPLTSIG (96 aa)) are interaction with NCS1. Residues 657-679 (NGQRPQTKSNREPNPDEAHTNSA) form a disordered region. Basic and acidic residues predominate over residues 665–675 (SNREPNPDEAH).

The protein belongs to the interleukin-1 receptor family. Homodimer. Interacts (calcium-independent) with NCS1/FREQ. Interacts (via the first immunoglobilin domain) with PTPRD (via the second immunoglobilin domain); this interaction is PTPRD-splicing-dependent and induces pre- and post-synaptic differentiation of neurons and is required for IL1RAPL1-mediated synapse formation. Detected in total brain extracts, olfactory bulb, hippocampus and striatum (at protein level).

The protein resides in the cell membrane. It localises to the cytoplasm. The protein localises to the cell projection. It is found in the axon. Its subcellular location is the dendrite. The enzyme catalyses NAD(+) + H2O = ADP-D-ribose + nicotinamide + H(+). In terms of biological role, may regulate secretion and presynaptic differentiation through inhibition of the activity of N-type voltage-gated calcium channel. May activate the MAP kinase JNK. Plays a role in neurite outgrowth. During dendritic spine formation can bidirectionally induce pre- and post-synaptic differentiation of neurons by trans-synaptically binding to PTPRD. The sequence is that of Interleukin-1 receptor accessory protein-like 1 (Il1rapl1) from Mus musculus (Mouse).